The chain runs to 884 residues: Putative GTP diphosphokinase RSH1, chloroplastic (884 aa).

Residues Met-1 to Val-55 constitute a chloroplast transit peptide. The HD domain maps to Phe-172–Met-279. Residues Leu-563–Thr-626 enclose the TGS domain. A compositionally biased stretch (polar residues) spans Gln-711–Ser-727. Residues Gln-711–Asp-747 are disordered. The 72-residue stretch at Trp-797–Ser-868 folds into the ACT domain.

The protein belongs to the RelA/SpoT family. Interacts with RPP4. Interacts with RPP5. In terms of tissue distribution, expressed in hypocotyls, shoots, cotyledons, rosette leaves, sepals and pistils.

Its subcellular location is the plastid. The protein localises to the chloroplast. The enzyme catalyses GTP + ATP = guanosine 3'-diphosphate 5'-triphosphate + AMP. Its function is as follows. May be involved in a rapid plant ppGpp (guanosine 3'-diphosphate 5'-diphosphate)-mediated response to pathogens and other stresses. Unable to functionally complement E.coli relA mutants. The protein is Putative GTP diphosphokinase RSH1, chloroplastic (RSH1) of Arabidopsis thaliana (Mouse-ear cress).